A 188-amino-acid polypeptide reads, in one-letter code: Elongation factor P (188 aa).

Lysine 34 is modified (N6-(3,6-diaminohexanoyl)-5-hydroxylysine).

Belongs to the elongation factor P family. In terms of processing, may be beta-lysylated on the epsilon-amino group of Lys-34 by the combined action of EpmA and EpmB, and then hydroxylated on the C5 position of the same residue by EpmC (if this protein is present). Lysylation is critical for the stimulatory effect of EF-P on peptide-bond formation. The lysylation moiety may extend toward the peptidyltransferase center and stabilize the terminal 3-CCA end of the tRNA. Hydroxylation of the C5 position on Lys-34 may allow additional potential stabilizing hydrogen-bond interactions with the P-tRNA.

It localises to the cytoplasm. The protein operates within protein biosynthesis; polypeptide chain elongation. Functionally, involved in peptide bond synthesis. Alleviates ribosome stalling that occurs when 3 or more consecutive Pro residues or the sequence PPG is present in a protein, possibly by augmenting the peptidyl transferase activity of the ribosome. Modification of Lys-34 is required for alleviation. The chain is Elongation factor P from Coxiella burnetii (strain CbuK_Q154) (Coxiella burnetii (strain Q154)).